The following is a 162-amino-acid chain: Photosystem II extrinsic protein V (162 aa).

Residues 1 to 25 form the signal peptide; the sequence is MFKKFSALFTLLFTLCLVNPMLVYS. Heme c contacts are provided by C62, C65, H66, and H117.

It belongs to the cytochrome c family. PsbV subfamily. In terms of assembly, PSII is composed of 1 copy each of membrane proteins PsbA, PsbB, PsbC, PsbD, PsbE, PsbF, PsbH, PsbI, PsbJ, PsbK, PsbL, PsbM, PsbT, PsbX, PsbY, PsbZ, Psb30/Ycf12, at least 3 peripheral proteins of the oxygen-evolving complex and a large number of cofactors. It forms dimeric complexes. It depends on heme c as a cofactor.

It localises to the plastid. Its subcellular location is the chloroplast thylakoid membrane. Its function is as follows. One of the extrinsic, lumenal subunits of photosystem II (PSII). PSII is a light-driven water plastoquinone oxidoreductase, using light energy to abstract electrons from H(2)O, generating a proton gradient subsequently used for ATP formation. The extrinsic proteins stabilize the structure of photosystem II oxygen-evolving complex (OEC), the ion environment of oxygen evolution and protect the OEC against heat-induced inactivation. The chain is Photosystem II extrinsic protein V from Guillardia theta (Cryptophyte).